We begin with the raw amino-acid sequence, 497 residues long: Protein nucleotidyltransferase YdiU (497 aa).

ATP-binding residues include G88, G90, R91, K110, D122, G123, R173, and R180. The active-site Proton acceptor is D249. Mg(2+) contacts are provided by N250 and D259. D259 serves as a coordination point for ATP.

Belongs to the SELO family. Mg(2+) serves as cofactor. The cofactor is Mn(2+).

It carries out the reaction L-seryl-[protein] + ATP = 3-O-(5'-adenylyl)-L-seryl-[protein] + diphosphate. The enzyme catalyses L-threonyl-[protein] + ATP = 3-O-(5'-adenylyl)-L-threonyl-[protein] + diphosphate. It catalyses the reaction L-tyrosyl-[protein] + ATP = O-(5'-adenylyl)-L-tyrosyl-[protein] + diphosphate. The catalysed reaction is L-histidyl-[protein] + UTP = N(tele)-(5'-uridylyl)-L-histidyl-[protein] + diphosphate. It carries out the reaction L-seryl-[protein] + UTP = O-(5'-uridylyl)-L-seryl-[protein] + diphosphate. The enzyme catalyses L-tyrosyl-[protein] + UTP = O-(5'-uridylyl)-L-tyrosyl-[protein] + diphosphate. Nucleotidyltransferase involved in the post-translational modification of proteins. It can catalyze the addition of adenosine monophosphate (AMP) or uridine monophosphate (UMP) to a protein, resulting in modifications known as AMPylation and UMPylation. This is Protein nucleotidyltransferase YdiU from Methylorubrum extorquens (strain CM4 / NCIMB 13688) (Methylobacterium extorquens).